The following is a 430-amino-acid chain: sn-glycerol-3-phosphate-binding periplasmic protein UgpB (430 aa).

The signal sequence occupies residues methionine 1–alanine 20. Residues tyrosine 62, aspartate 86, serine 141, serine 268, glycine 302, tyrosine 341, and arginine 392 each coordinate sn-glycerol 3-phosphate.

Belongs to the bacterial solute-binding protein 1 family. In terms of assembly, the complex is composed of two ATP-binding proteins (UgpC), two transmembrane proteins (UgpA and UgpE) and a solute-binding protein (UgpB).

The protein localises to the periplasm. In terms of biological role, part of the ABC transporter complex UgpBAEC involved in sn-glycerol-3-phosphate (G3P) import. Binds G3P. The sequence is that of sn-glycerol-3-phosphate-binding periplasmic protein UgpB (ugpB) from Rhizobium meliloti (strain 1021) (Ensifer meliloti).